A 509-amino-acid polypeptide reads, in one-letter code: Activin receptor type-1 (509 aa).

A signal peptide spans 1-20 (MVDGAMILSVLMMMALPSPS). Residues 21 to 123 (MEDEEPKVNP…FPGSQNFHLE (103 aa)) are Extracellular-facing. N-linked (GlcNAc...) asparagine glycosylation occurs at N102. Residues 124–146 (VGLIILSVVFAVCLFACILGVAL) form a helical membrane-spanning segment. Residues 147–509 (RKFKRRNQER…NSLDKLKTDC (363 aa)) are Cytoplasmic-facing. One can recognise a GS domain in the interval 178-207 (STLAELLDHSCTSGSGSGLPFLVQRTVARQ). In terms of domain architecture, Protein kinase spans 208 to 502 (ITLLECVGKG…KTLTKIDNSL (295 aa)). Residues 214–222 (VGKGRYGEV) and K235 each bind ATP. D336 functions as the Proton acceptor in the catalytic mechanism. The residue at position 501 (S501) is a Phosphoserine.

The protein belongs to the protein kinase superfamily. TKL Ser/Thr protein kinase family. TGFB receptor subfamily. As to quaternary structure, interacts with FKBP1A. Interacts with FCHO1. Interacts with CLU. Interacts with type II receptors AMHR2 and ACVR2A. Interacts with BMP7. Interacts with GDF2/BMP9. Interacts with BMP6 (when glycosylated); the interaction may induce HAMP expression. Interacts with TSC22D1/TSC-22. Requires Mg(2+) as cofactor. Mn(2+) is required as a cofactor. Urogenital ridge, testis, ovary, brain and lungs.

It localises to the membrane. It carries out the reaction L-threonyl-[receptor-protein] + ATP = O-phospho-L-threonyl-[receptor-protein] + ADP + H(+). The catalysed reaction is L-seryl-[receptor-protein] + ATP = O-phospho-L-seryl-[receptor-protein] + ADP + H(+). In terms of biological role, bone morphogenetic protein (BMP) type I receptor that is involved in a wide variety of biological processes, including bone, heart, cartilage, nervous, and reproductive system development and regulation. As a type I receptor, forms heterotetrameric receptor complexes with the type II receptors AMHR2, ACVR2A ors ACVR2B. Upon binding of ligands such as BMP7 or GDF2/BMP9 to the heteromeric complexes, type II receptors transphosphorylate ACVR1 intracellular domain. In turn, ACVR1 kinase domain is activated and subsequently phosphorylates SMAD1/5/8 proteins that transduce the signal. In addition to its role in mediating BMP pathway-specific signaling, suppresses TGFbeta/activin pathway signaling by interfering with the binding of activin to its type II receptor. Besides canonical SMAD signaling, can activate non-canonical pathways such as p38 mitogen-activated protein kinases/MAPKs. May promote the expression of HAMP, potentially via its interaction with BMP6. The sequence is that of Activin receptor type-1 (Acvr1) from Rattus norvegicus (Rat).